Consider the following 164-residue polypeptide: UPF0201 protein MA_4659 (164 aa).

It belongs to the UPF0201 family.

This Methanosarcina acetivorans (strain ATCC 35395 / DSM 2834 / JCM 12185 / C2A) protein is UPF0201 protein MA_4659.